The primary structure comprises 185 residues: Ribosome-recycling factor (185 aa).

Lysine 162 is modified (N6-acetyllysine).

Belongs to the RRF family.

The protein resides in the cytoplasm. Functionally, responsible for the release of ribosomes from messenger RNA at the termination of protein biosynthesis. May increase the efficiency of translation by recycling ribosomes from one round of translation to another. The protein is Ribosome-recycling factor of Shigella boydii serotype 18 (strain CDC 3083-94 / BS512).